A 1013-amino-acid polypeptide reads, in one-letter code: PHD finger protein 20-like protein 1 (1013 aa).

The Tudor 1 domain maps to 11–71 (ITFEIGARLE…SNRLRPLERP (61 aa)). Residues Lys-75 and Lys-79 each participate in a glycyl lysine isopeptide (Lys-Gly) (interchain with G-Cter in SUMO2) cross-link. Positions 85–141 (FDFKAGEEVLARWTDCRYYPAKIEAINKEGTFTVQFYDGVIRCLKRMHIKAMPEDAK) constitute a Tudor 2 domain. 4 disordered regions span residues 183-206 (AKNK…RDGG), 309-368 (EQAI…TPKS), 389-454 (VINK…QSSV), and 482-511 (VTGS…FANP). Positions 315 to 346 (KPQSQKKNEAVISSSANTQKPALLSSTLSSGK) are enriched in polar residues. Residue Ser-368 is modified to Phosphoserine. Positions 404 to 415 (PCKHSERRRRSQ) are enriched in basic residues. At Ser-432 the chain carries Phosphoserine. Residues 443-453 (SISSQNQQQSS) are compositionally biased toward low complexity. The segment covering 496–505 (ECPREEKEET) has biased composition (basic and acidic residues). Lys-530 participates in a covalent cross-link: Glycyl lysine isopeptide (Lys-Gly) (interchain with G-Cter in SUMO2). Basic and acidic residues predominate over residues 533-565 (KKVKLEEKTSTAFGKRKEKDKEKKEKRDKDHYK). The segment at 533–585 (KKVKLEEKTSTAFGKRKEKDKEKKEKRDKDHYKPKQKKKKKKKKKSKQHDYSD) is disordered. Residues 566 to 579 (PKQKKKKKKKKKSK) are compositionally biased toward basic residues. A PHD-type zinc finger spans residues 681-729 (IVRCICELDEENGFMIQCEECLCWQHSVCMGLLEDSIPEQYICYICRDP). Residues 824–852 (RKITPQDRANSEGKECVQNHKEPALRMEE) are compositionally biased toward basic and acidic residues. The disordered stretch occupies residues 824–911 (RKITPQDRAN…LLYKNRGVSE (88 aa)). Over residues 854–878 (YITSEHSYQKPQSFSQDCQSLTDPG) the composition is skewed to polar residues. Over residues 879-892 (SSDDDDASSFEEDG) the composition is skewed to acidic residues. Lys-905 carries the N6-acetyllysine modification.

As to quaternary structure, interacts with methylated DNMT1 (DNMT1K142me1). Interacts with SOX2.

Its subcellular location is the nucleus. In terms of biological role, is a negative regulator of proteasomal degradation of a set of methylated proteins, including DNMT1 and SOX2. Involved in the maintainance of embryonic stem cells pluripotency, through the regulation of SOX2 levels. In Mus musculus (Mouse), this protein is PHD finger protein 20-like protein 1 (Phf20l1).